Reading from the N-terminus, the 558-residue chain is Leucine-rich repeat-containing protein 71 (558 aa).

The span at 1–18 shows a compositional bias: low complexity; sequence MSSEPSTTGTSPRTPRPG. Disordered stretches follow at residues 1-55 and 86-112; these read MSSE…NPEE and RVQQ…SASC. Over residues 28–38 the composition is skewed to basic and acidic residues; sequence KKGDRAAKDKT. Over residues 86 to 99 the composition is skewed to polar residues; sequence RVQQSSVPSASTSE. LRR repeat units lie at residues 196-216, 221-241, 253-274, and 281-302; these read TLRK…SKLM, TIVH…QLLG, TLVS…YIAD, and SLLW…KLAE. The disordered stretch occupies residues 325 to 415; it reads GTQERSRSPS…DAAKAGKGKV (91 aa). Composition is skewed to basic and acidic residues over residues 339–348 and 380–391; these read GDSKAEREKS and KTGEVVKKEEKL.

The protein is Leucine-rich repeat-containing protein 71 (Lrrc71) of Mus musculus (Mouse).